Reading from the N-terminus, the 1058-residue chain is Carbamoyl phosphate synthase large chain (1058 aa).

A carboxyphosphate synthetic domain region spans residues 1–401 (MSKRKDIQKI…SLLKACRSLE (401 aa)). Arg129, Arg169, Gly175, Gly176, Arg208, Ile210, Glu215, Gly241, Ile242, His243, Gln284, and Glu298 together coordinate ATP. Residues 133-327 (KQLMQELDQP…IAKLAAKIAV (195 aa)) form the ATP-grasp 1 domain. Mg(2+) is bound by residues Gln284, Glu298, and Asn300. Mn(2+) is bound by residues Gln284, Glu298, and Asn300. Residues 402 to 546 (IGVCHNEMTS…YSTYELENES (145 aa)) form an oligomerization domain region. The segment at 547–929 (VQSNKESILV…ALYKAFEANN (383 aa)) is carbamoyl phosphate synthetic domain. In terms of domain architecture, ATP-grasp 2 spans 671–861 (EKALKELGIP…MAQIATKLIL (191 aa)). ATP is bound by residues Arg707, Ser746, Ile748, Glu752, Gly777, Val778, His779, Ser780, Gln820, and Glu832. Residues Gln820, Glu832, and Asn834 each contribute to the Mg(2+) site. Positions 820, 832, and 834 each coordinate Mn(2+). The MGS-like domain maps to 930–1058 (SHLSEFGQIV…ESRCFNIEAI (129 aa)). An allosteric domain region spans residues 930–1058 (SHLSEFGQIV…ESRCFNIEAI (129 aa)).

It belongs to the CarB family. Composed of two chains; the small (or glutamine) chain promotes the hydrolysis of glutamine to ammonia, which is used by the large (or ammonia) chain to synthesize carbamoyl phosphate. Tetramer of heterodimers (alpha,beta)4. Mg(2+) serves as cofactor. The cofactor is Mn(2+).

It catalyses the reaction hydrogencarbonate + L-glutamine + 2 ATP + H2O = carbamoyl phosphate + L-glutamate + 2 ADP + phosphate + 2 H(+). The enzyme catalyses hydrogencarbonate + NH4(+) + 2 ATP = carbamoyl phosphate + 2 ADP + phosphate + 2 H(+). The protein operates within amino-acid biosynthesis; L-arginine biosynthesis; carbamoyl phosphate from bicarbonate: step 1/1. It participates in pyrimidine metabolism; UMP biosynthesis via de novo pathway; (S)-dihydroorotate from bicarbonate: step 1/3. Functionally, large subunit of the glutamine-dependent carbamoyl phosphate synthetase (CPSase). CPSase catalyzes the formation of carbamoyl phosphate from the ammonia moiety of glutamine, carbonate, and phosphate donated by ATP, constituting the first step of 2 biosynthetic pathways, one leading to arginine and/or urea and the other to pyrimidine nucleotides. The large subunit (synthetase) binds the substrates ammonia (free or transferred from glutamine from the small subunit), hydrogencarbonate and ATP and carries out an ATP-coupled ligase reaction, activating hydrogencarbonate by forming carboxy phosphate which reacts with ammonia to form carbamoyl phosphate. The protein is Carbamoyl phosphate synthase large chain of Streptococcus pyogenes serotype M5 (strain Manfredo).